Reading from the N-terminus, the 406-residue chain is Argininosuccinate synthase (406 aa).

Residues 13-21 (AYSGGLDTS) and alanine 40 contribute to the ATP site. L-citrulline is bound by residues tyrosine 91 and serine 96. Glycine 121 contacts ATP. Positions 123, 127, and 128 each coordinate L-aspartate. Position 127 (asparagine 127) interacts with L-citrulline. Residues arginine 131, serine 180, serine 189, glutamate 265, and tyrosine 277 each contribute to the L-citrulline site.

This sequence belongs to the argininosuccinate synthase family. Type 1 subfamily. As to quaternary structure, homotetramer.

It localises to the cytoplasm. It catalyses the reaction L-citrulline + L-aspartate + ATP = 2-(N(omega)-L-arginino)succinate + AMP + diphosphate + H(+). It participates in amino-acid biosynthesis; L-arginine biosynthesis; L-arginine from L-ornithine and carbamoyl phosphate: step 2/3. This chain is Argininosuccinate synthase, found in Syntrophotalea carbinolica (strain DSM 2380 / NBRC 103641 / GraBd1) (Pelobacter carbinolicus).